Consider the following 273-residue polypeptide: NAD-dependent protein deacetylase 2 (273 aa).

The region spanning 1–273 (MSNAPLANQS…RCEAALAFLL (273 aa)) is the Deacetylase sirtuin-type domain. NAD(+) contacts are provided by residues 26–46 (GAGC…GNWK) and 104–107 (QNVD). H122 functions as the Proton acceptor in the catalytic mechanism. 4 residues coordinate Zn(2+): C130, C133, C181, and C184. Residues 221-223 (GSS), 247-249 (NLG), and C265 each bind NAD(+).

The protein belongs to the sirtuin family. Class II subfamily. Requires Zn(2+) as cofactor.

The protein resides in the cytoplasm. It catalyses the reaction N(6)-acetyl-L-lysyl-[protein] + NAD(+) + H2O = 2''-O-acetyl-ADP-D-ribose + nicotinamide + L-lysyl-[protein]. NAD-dependent protein deacetylase which modulates the activities of several enzymes which are inactive in their acetylated form. The chain is NAD-dependent protein deacetylase 2 from Bradyrhizobium diazoefficiens (strain JCM 10833 / BCRC 13528 / IAM 13628 / NBRC 14792 / USDA 110).